We begin with the raw amino-acid sequence, 476 residues long: Protein transport protein Sec61 subunit alpha isoform 1 (476 aa).

The Cytoplasmic portion of the chain corresponds to 1-33; it reads MGIKFLEVIKPFCVILPEIQKPERKIQFKEKVL. The helical transmembrane segment at 34–53 threads the bilayer; that stretch reads WTAITLFIFLVCCQIPLFGI. At 54 to 76 the chain is on the lumenal side; that stretch reads MSSDSADPFYWMRVILASNRGTL. Residues 77–96 traverse the membrane as a helical segment; that stretch reads MELGISPIVTSGLIMQLLAG. Topologically, residues 97 to 117 are cytoplasmic; it reads AKIIEVGDTPKDRALFNGAQK. The chain crosses the membrane as a helical span at residues 118–138; the sequence is LFGMTITIGQSIVYVMTGMYG. Over 139 to 144 the chain is Lumenal; that stretch reads DPSEMG. A helical transmembrane segment spans residues 145–165; sequence AGVCLLITIQLFVAGLIVLLL. Topologically, residues 166 to 172 are cytoplasmic; sequence DELLQKG. Residues 173-193 traverse the membrane as a helical segment; it reads YGLGSGISLFIATNICETIVW. Residues 194 to 240 lie on the Lumenal side of the membrane; that stretch reads KAFSPTTVNTGRGMEFEGAIIALFHLLATRTDKVRALREAFYRQNLP. Residues 241–261 traverse the membrane as a helical segment; the sequence is NLMNLIATIFVFAVVIYFQGF. Over 262–288 the chain is Cytoplasmic; that stretch reads RVDLPIKSARYRGQYNTYPIKLFYTSN. The chain crosses the membrane as a helical span at residues 289 to 309; sequence IPIILQSALVSNLYVISQMLS. Topologically, residues 310–354 are lumenal; it reads ARFSGNLLVSLLGTWSDTSSGGPARAYPVGGLCYYLSPPESFGSV. A helical transmembrane segment spans residues 355-375; the sequence is LEDPVHAVVYIVFMLGSCAFF. Residues 376–420 are Cytoplasmic-facing; it reads SKTWIEVSGSSAKDVAKQLKEQQMVMRGHRETSMVHELNRYIPTA. A helical transmembrane segment spans residues 421–441; sequence AAFGGLCIGALSVLADFLGAI. The Lumenal portion of the chain corresponds to 442 to 445; sequence GSGT. Residues 446 to 462 form a helical membrane-spanning segment; the sequence is GILLAVTIIYQYFEIFV. Residues 463–476 lie on the Cytoplasmic side of the membrane; that stretch reads KEQSEVGSMGALLF.

It belongs to the SecY/SEC61-alpha family. In terms of assembly, the SEC61 channel-forming translocon complex consists of channel-forming core components SEC61A1, SEC61B and SEC61G and different auxiliary components such as SEC62 and SEC63. The SEC61 channel associates with the multi-pass translocon (MPT) complex.

It localises to the endoplasmic reticulum membrane. In terms of biological role, component of SEC61 channel-forming translocon complex that mediates transport of signal peptide-containing precursor polypeptides across the endoplasmic reticulum (ER). Forms a ribosome receptor and a gated pore in the ER membrane, both functions required for cotranslational translocation of nascent polypeptides. May cooperate with auxiliary protein SEC62, SEC63 and HSPA5/BiP to enable post-translational transport of small presecretory proteins. The SEC61 channel is also involved in ER membrane insertion of transmembrane proteins: it mediates membrane insertion of the first few transmembrane segments of proteins, while insertion of subsequent transmembrane regions of multi-pass membrane proteins is mediated by the multi-pass translocon (MPT) complex. The SEC61 channel cooperates with the translocating protein TRAM1 to import nascent proteins into the ER. Controls the passive efflux of calcium ions from the ER lumen to the cytosol through SEC61 channel, contributing to the maintenance of cellular calcium homeostasis. Plays a critical role in nephrogenesis, specifically at pronephros stage. The protein is Protein transport protein Sec61 subunit alpha isoform 1 (SEC61A1) of Bos taurus (Bovine).